Reading from the N-terminus, the 247-residue chain is Ribonuclease 3 (247 aa).

In terms of domain architecture, RNase III spans 21-149 (VDHQPLLDHL…LFGAIFRQHG (129 aa)). Glu-62 lines the Mg(2+) pocket. Asp-66 is a catalytic residue. Residues Asp-135 and Glu-138 each coordinate Mg(2+). The active site involves Glu-138. The region spanning 176-244 (DWKTTLQEEL…AHQAFRKLRE (69 aa)) is the DRBM domain.

The protein belongs to the ribonuclease III family. Homodimer. Requires Mg(2+) as cofactor.

The protein resides in the cytoplasm. The enzyme catalyses Endonucleolytic cleavage to 5'-phosphomonoester.. Its function is as follows. Digests double-stranded RNA. Involved in the processing of primary rRNA transcript to yield the immediate precursors to the large and small rRNAs (23S and 16S). Processes some mRNAs, and tRNAs when they are encoded in the rRNA operon. Processes pre-crRNA and tracrRNA of type II CRISPR loci if present in the organism. The chain is Ribonuclease 3 from Corynebacterium glutamicum (strain ATCC 13032 / DSM 20300 / JCM 1318 / BCRC 11384 / CCUG 27702 / LMG 3730 / NBRC 12168 / NCIMB 10025 / NRRL B-2784 / 534).